We begin with the raw amino-acid sequence, 496 residues long: Genome polyprotein (496 aa).

Residues 1–447 (SRCTHLENRD…HTVLGGAFNS (447 aa)) lie on the Extracellular side of the membrane. Intrachain disulfides connect Cys3-Cys30, Cys60-Cys116, Cys60-Cys121, Cys74-Cys105, Cys92-Cys116, and Cys92-Cys121. Residues 98-111 (DRGWGNHCGLFGKG) are fusion peptide. N-linked (GlcNAc...) asparagine; by host glycosylation occurs at Asn154. Cystine bridges form between Cys186-Cys290 and Cys307-Cys338. A helical membrane pass occupies residues 448 to 468 (IFGGVGFLPKLLMGVALAWLG). Residues 469–479 (LNTRNPTMSMS) lie on the Cytoplasmic side of the membrane. A helical transmembrane segment spans residues 480–496 (FLLAGGLVLAMTLGVGA).

Homodimer; in the endoplasmic reticulum and Golgi. Post-translationally, N-glycosylated.

It localises to the virion membrane. It is found in the host endoplasmic reticulum membrane. Binds to host cell surface receptor and mediates fusion between viral and cellular membranes. Envelope protein is synthesized in the endoplasmic reticulum in the form of heterodimer with protein prM. They play a role in virion budding in the ER, and the newly formed immature particle is covered with 60 spikes composed of heterodimer between precursor prM and envelope protein E. The virion is transported to the Golgi apparatus where the low pH causes dissociation of PrM-E heterodimers and formation of E homodimers. prM-E cleavage is ineficient, and many virions are only partially matured. These uncleaved prM would play a role in immune evasion. This is Genome polyprotein from Bos taurus (Bovine).